Reading from the N-terminus, the 205-residue chain is Adenylyl-sulfate kinase (205 aa).

Residue Gly31–Ser38 participates in ATP binding. Ser105 serves as the catalytic Phosphoserine intermediate.

Belongs to the APS kinase family.

It carries out the reaction adenosine 5'-phosphosulfate + ATP = 3'-phosphoadenylyl sulfate + ADP + H(+). The protein operates within sulfur metabolism; hydrogen sulfide biosynthesis; sulfite from sulfate: step 2/3. In terms of biological role, catalyzes the synthesis of activated sulfate. The sequence is that of Adenylyl-sulfate kinase from Shewanella baltica (strain OS195).